The following is a 427-amino-acid chain: Inward rectifier potassium channel 2 (427 aa).

Over 1-81 (MGSVRTNRYS…IFTTCVDIRW (81 aa)) the chain is Cytoplasmic. Cys-76 carries the S-nitrosocysteine modification. The chain crosses the membrane as a helical span at residues 82 to 106 (RWMLVIFCLAFVLSWLFFGCVFWLI). Residues 107 to 128 (ALLHGDLDASKESKACVSEVNS) lie on the Extracellular side of the membrane. Residues 129 to 140 (FTAAFLFSIETQ) constitute an intramembrane region (helical; Pore-forming). An intramembrane region (pore-forming) is located at residues 141–147 (TTIGYGF). The short motif at 142–147 (TIGYGF) is the Selectivity filter element. The Extracellular portion of the chain corresponds to 148–156 (RCVTDECPV). The chain crosses the membrane as a helical span at residues 157-178 (AVFMVVFQSIVGCIIDAFIIGA). Topologically, residues 179-427 (VMAKMAKPKK…PRPLRRESEI (249 aa)) are cytoplasmic. The interval 181-208 (AKMAKPKKRNETLVFSHNAVIAMRDGKL) is polyphosphoinositide (PIP2)-binding. A disordered region spans residues 384-427 (SKEEDDSENGVPESTSTDTPPDLDLHNQASVPLEPRPLRRESEI). The PDZ-binding motif lies at 425-427 (SEI).

The protein belongs to the inward rectifier-type potassium channel (TC 1.A.2.1) family. KCNJ2 subfamily. In terms of assembly, homotetramer. Homomultimeric and heteromultimeric association with KCNJ4/Kir2.3. Can form heteromeric channels with Kir2.6/KCNJ18. Associates, via its PDZ-recognition domain, with a complex containing LIN7A, LIN7B, LIN7C, DLG1, CASK and APBA1. S-nitrosylation increases the open probability and inward rectifying currents.

It localises to the cell membrane. The protein localises to the sarcolemma. Its subcellular location is the T-tubule. The enzyme catalyses K(+)(in) = K(+)(out). With respect to regulation, activated by phosphatidylinositol 4,5 biphosphate (PtdIns(4,5)P2). Functionally, inward rectifier potassium channels are characterized by a greater tendency to allow potassium to flow into the cell rather than out of it. Their voltage dependence is regulated by the concentration of extracellular potassium; as external potassium is raised, the voltage range of the channel opening shifts to more positive voltages. The inward rectification is mainly due to the blockage of outward current by internal magnesium. Blocked by external barium or cesium. Probably participates in establishing action potential waveform and excitability of neuronal and muscle tissues. This Canis lupus familiaris (Dog) protein is Inward rectifier potassium channel 2 (KCNJ2).